We begin with the raw amino-acid sequence, 233 residues long: GSK-3-binding protein FRAT2 (233 aa).

The disordered stretch occupies residues 1-24 (MPCRREEEEEAGEEAEGEEEEDDS). Over residues 7-24 (EEEEAGEEAEGEEEEDDS) the composition is skewed to acidic residues. Residues 174–196 (DPHRLLQQLVLSGNLIKEAVRRL) are involved in GSK-3 binding. Residues 204–233 (AATGPASAPGPGGGRSGPDRIALQPSGSLL) form a disordered region.

Belongs to the GSK-3-binding protein family. As to quaternary structure, binds GSK-3 and prevents GSK-3-dependent phosphorylation.

Functionally, positively regulates the Wnt signaling pathway by stabilizing beta-catenin through the association with GSK-3. This chain is GSK-3-binding protein FRAT2 (FRAT2), found in Homo sapiens (Human).